We begin with the raw amino-acid sequence, 705 residues long: Methionine--tRNA ligase (705 aa).

Positions 17–27 match the 'HIGH' region motif; it reads PYANGPVHLGH. 4 residues coordinate Zn(2+): Cys149, Cys152, Cys162, and Cys165. The 'KMSKS' region signature appears at 347 to 351; sequence KFSKS. Lys350 contributes to the ATP binding site. One can recognise a tRNA-binding domain in the interval 604-705; that stretch reads EFQKVDLRVA…GEGINGQSVQ (102 aa).

The protein belongs to the class-I aminoacyl-tRNA synthetase family. MetG type 1 subfamily. As to quaternary structure, homodimer. Requires Zn(2+) as cofactor.

It is found in the cytoplasm. It catalyses the reaction tRNA(Met) + L-methionine + ATP = L-methionyl-tRNA(Met) + AMP + diphosphate. Its function is as follows. Is required not only for elongation of protein synthesis but also for the initiation of all mRNA translation through initiator tRNA(fMet) aminoacylation. The polypeptide is Methionine--tRNA ligase (Chlorobium chlorochromatii (strain CaD3)).